Reading from the N-terminus, the 284-residue chain is Ribosomal RNA small subunit methyltransferase A (284 aa).

S-adenosyl-L-methionine is bound by residues Asn-22, Leu-24, Gly-49, Glu-70, Asp-97, and Asn-117.

This sequence belongs to the class I-like SAM-binding methyltransferase superfamily. rRNA adenine N(6)-methyltransferase family. RsmA subfamily.

It is found in the cytoplasm. It catalyses the reaction adenosine(1518)/adenosine(1519) in 16S rRNA + 4 S-adenosyl-L-methionine = N(6)-dimethyladenosine(1518)/N(6)-dimethyladenosine(1519) in 16S rRNA + 4 S-adenosyl-L-homocysteine + 4 H(+). Its function is as follows. Specifically dimethylates two adjacent adenosines (A1518 and A1519) in the loop of a conserved hairpin near the 3'-end of 16S rRNA in the 30S particle. May play a critical role in biogenesis of 30S subunits. This chain is Ribosomal RNA small subunit methyltransferase A, found in Desulforapulum autotrophicum (strain ATCC 43914 / DSM 3382 / VKM B-1955 / HRM2) (Desulfobacterium autotrophicum).